The chain runs to 147 residues: Putative protein CLUHP3 (147 aa).

The disordered stretch occupies residues 14 to 47 (KEPEGGRRRLSHPGNMGWMRPSQETTPPDRSHHS).

This is Putative protein CLUHP3 (CLUHP3) from Homo sapiens (Human).